Consider the following 130-residue polypeptide: UPF0251 protein MmarC6_0272 (130 aa).

Belongs to the UPF0251 family.

The polypeptide is UPF0251 protein MmarC6_0272 (Methanococcus maripaludis (strain C6 / ATCC BAA-1332)).